The chain runs to 313 residues: UPF0761 membrane protein VS_0126 (313 aa).

The next 6 helical transmembrane spans lie at 41-61 (YLAY…LSIL), 104-124 (MTAV…SNID), 139-159 (AVLS…LIGA), 185-205 (VIRK…YLLV), 217-237 (AGSL…AAYI), and 249-269 (ALAA…IVLV). The span at 281–290 (EQWSDSQEMV) shows a compositional bias: polar residues. The segment at 281 to 313 (EQWSDSQEMVHSSDKDKITEQGNNSDSTDPESK) is disordered.

It belongs to the UPF0761 family.

It is found in the cell inner membrane. The polypeptide is UPF0761 membrane protein VS_0126 (Vibrio atlanticus (strain LGP32) (Vibrio splendidus (strain Mel32))).